Consider the following 127-residue polypeptide: Large ribosomal subunit protein eL8 (127 aa).

It belongs to the eukaryotic ribosomal protein eL8 family. Part of the 50S ribosomal subunit. Probably part of the RNase P complex.

It is found in the cytoplasm. Its function is as follows. Multifunctional RNA-binding protein that recognizes the K-turn motif in ribosomal RNA, the RNA component of RNase P, box H/ACA, box C/D and box C'/D' sRNAs. The chain is Large ribosomal subunit protein eL8 from Hyperthermus butylicus (strain DSM 5456 / JCM 9403 / PLM1-5).